The following is a 132-amino-acid chain: Interleukin-5 (132 aa).

Residues 1–19 (MRMLLCLNVLTLSCVWAIA) form the signal peptide. N-linked (GlcNAc...) asparagine glycosylation is found at asparagine 45, asparagine 74, and asparagine 88.

This sequence belongs to the IL-5 family. As to quaternary structure, homodimer; disulfide-linked. Interacts with IL5RA. Interacts with CSF2RB.

The protein resides in the secreted. Its function is as follows. Homodimeric cytokine expressed predominantly by T-lymphocytes and NK cells that plays an important role in the survival, differentiation, and chemotaxis of eosinophils. Acts also on activated and resting B-cells to induce immunoglobulin production, growth, and differentiation. Mechanistically, exerts its biological effects through a receptor composed of IL5RA subunit and the cytokine receptor common subunit beta/CSF2RB. Binding to the receptor leads to activation of various kinases including LYN, SYK and JAK2 and thereby propagates signals through the RAS-MAPK and JAK-STAT5 pathways respectively. The protein is Interleukin-5 (Il5) of Rattus norvegicus (Rat).